Here is a 522-residue protein sequence, read N- to C-terminus: Aspartic and glutamic acid-rich protein (522 aa).

The N-terminal stretch at 1 to 16 is a signal peptide; sequence MKVFVYLLVTFSLTNA. 2 stretches are compositionally biased toward basic and acidic residues: residues 72–81 and 93–102; these read YDDFFPKDTS and SRNDDGYDLA. Positions 72 to 497 are disordered; sequence YDDFFPKDTS…KSKDAAQGNI (426 aa). A compositionally biased stretch (acidic residues) spans 109 to 125; that stretch reads DDEEAYDDFDEVDDRAD. A compositionally biased stretch (basic and acidic residues) spans 142 to 152; sequence KLPAEEESKND. 4 stretches are compositionally biased toward acidic residues: residues 153–166, 173–200, 228–261, and 267–283; these read MDEE…EEDK, FAED…EDEV, DNEE…DESD, and EVED…TEEG. Residues 284 to 343 show a composition bias toward basic and acidic residues; it reads SEIKQNDETEEQPEKKFDADKEHEDAPEPLKEKLSDESKARAEDESDKSEDAAKEIKEPE. The stretch at 319 to 465 forms a coiled coil; sequence DESKARAEDE…KSNLALKRDE (147 aa). Residues 358-374 show a composition bias toward acidic residues; it reads DEAELLDDEAELSDDEA. 3 stretches are compositionally biased toward basic and acidic residues: residues 375–397, 407–453, and 461–491; these read ELSK…KAEK, DEAK…EFAK, and LKRD…KSKD.

As to expression, component of the acid-soluble organic matrix of the aragonitic skeleton (at protein level).

Its subcellular location is the secreted. This chain is Aspartic and glutamic acid-rich protein, found in Acropora millepora (Staghorn coral).